We begin with the raw amino-acid sequence, 201 residues long: UPF0301 protein RHE_CH00966 (201 aa).

This sequence belongs to the UPF0301 (AlgH) family.

The sequence is that of UPF0301 protein RHE_CH00966 from Rhizobium etli (strain ATCC 51251 / DSM 11541 / JCM 21823 / NBRC 15573 / CFN 42).